Reading from the N-terminus, the 291-residue chain is 4-diphosphocytidyl-2-C-methyl-D-erythritol kinase (291 aa).

K10 is an active-site residue. Position 94–104 (94–104) interacts with ATP; that stretch reads PVSAGLAGGSS. Residue D136 is part of the active site.

Belongs to the GHMP kinase family. IspE subfamily.

It carries out the reaction 4-CDP-2-C-methyl-D-erythritol + ATP = 4-CDP-2-C-methyl-D-erythritol 2-phosphate + ADP + H(+). The protein operates within isoprenoid biosynthesis; isopentenyl diphosphate biosynthesis via DXP pathway; isopentenyl diphosphate from 1-deoxy-D-xylulose 5-phosphate: step 3/6. Catalyzes the phosphorylation of the position 2 hydroxy group of 4-diphosphocytidyl-2C-methyl-D-erythritol. The sequence is that of 4-diphosphocytidyl-2-C-methyl-D-erythritol kinase from Listeria welshimeri serovar 6b (strain ATCC 35897 / DSM 20650 / CCUG 15529 / CIP 8149 / NCTC 11857 / SLCC 5334 / V8).